Consider the following 357-residue polypeptide: tRNA/tmRNA (uracil-C(5))-methyltransferase (357 aa).

Gln180, Tyr209, Asn214, Glu230, and Asp290 together coordinate S-adenosyl-L-methionine. Catalysis depends on Cys315, which acts as the Nucleophile. Glu349 serves as the catalytic Proton acceptor.

This sequence belongs to the class I-like SAM-binding methyltransferase superfamily. RNA M5U methyltransferase family. TrmA subfamily.

The enzyme catalyses uridine(54) in tRNA + S-adenosyl-L-methionine = 5-methyluridine(54) in tRNA + S-adenosyl-L-homocysteine + H(+). The catalysed reaction is uridine(341) in tmRNA + S-adenosyl-L-methionine = 5-methyluridine(341) in tmRNA + S-adenosyl-L-homocysteine + H(+). Its function is as follows. Dual-specificity methyltransferase that catalyzes the formation of 5-methyluridine at position 54 (m5U54) in all tRNAs, and that of position 341 (m5U341) in tmRNA (transfer-mRNA). The sequence is that of tRNA/tmRNA (uracil-C(5))-methyltransferase from Campylobacter jejuni subsp. jejuni serotype O:2 (strain ATCC 700819 / NCTC 11168).